Reading from the N-terminus, the 320-residue chain is Phospho-N-acetylmuramoyl-pentapeptide-transferase (320 aa).

Helical transmembrane passes span 6–26, 54–74, 81–101, 117–137, 145–165, 175–195, 200–220, 226–246, 251–271, and 300–320; these read FLTP…LFIG, MGGL…AIWL, LWIA…DDFI, LAGQ…EGFS, IGTI…LVGF, IDGL…IIAF, IDVA…LIFN, IFMG…MSIL, FSLL…MLQV, and RIDI…LLIF.

Belongs to the glycosyltransferase 4 family. MraY subfamily. Mg(2+) serves as cofactor.

It is found in the cell membrane. It carries out the reaction UDP-N-acetyl-alpha-D-muramoyl-L-alanyl-gamma-D-glutamyl-L-lysyl-D-alanyl-D-alanine + di-trans,octa-cis-undecaprenyl phosphate = Mur2Ac(oyl-L-Ala-gamma-D-Glu-L-Lys-D-Ala-D-Ala)-di-trans,octa-cis-undecaprenyl diphosphate + UMP. The protein operates within cell wall biogenesis; peptidoglycan biosynthesis. Its function is as follows. Catalyzes the initial step of the lipid cycle reactions in the biosynthesis of the cell wall peptidoglycan: transfers peptidoglycan precursor phospho-MurNAc-pentapeptide from UDP-MurNAc-pentapeptide onto the lipid carrier undecaprenyl phosphate, yielding undecaprenyl-pyrophosphoryl-MurNAc-pentapeptide, known as lipid I. This chain is Phospho-N-acetylmuramoyl-pentapeptide-transferase, found in Latilactobacillus sakei subsp. sakei (strain 23K) (Lactobacillus sakei subsp. sakei).